The chain runs to 714 residues: MQPRTPLTLCVLLSQVLLVTSADDLECTPGFQRKVLHIHQPAEFIEDQPVLNLTFNDCKGNEKLHYEVSSPHFKVNSDGTLVALRNITAVGRTLFVHARTPHAEDMAELVIVGGKDIQGSLQDIFKFARTSPVPRQKRSIVVSPILIPENQRQPFPRDVGKVVDSDRPEGSKFRLTGKGVDQDPKGTFRINENTGSVSVTRTLDRETIATYQLYVETTDASGKTLEGPVPLEVIVIDQNDNRPIFREGPYIGHVMEGSPTGTTVMRMTAFDADDPATDNALLRYNIRQQTPDKPSPNMFYIDPEKGDIVTVVSPALLDRETLENPKYELIIEAQDMAGLDVGLTGTATATIVIDDKNDHSPKFTKKEFQATVEEGAVGVIVNLTVEDKDDPTTGAWRAAYTIINGNPGQSFEIHTNPQTNEGMLSVVKPLDYEISAFHTLLIKVENEDPLVPDVSYGPSSTATVHITVLDVNEGPVFYPDPMMVTKQENISVGSVLLTVNATDPDSLQHQTIRYSIYKDPAGWLSINPINGTVDTTAVLDRESPFVHNSVYTALFLAIDSGNPPATGTGTLLITLEDINDNAPVIYPTVAEVCDDARNLSVVILGASDKDLHPNTDPFKFEIHKQTVPDKVWKISKINNTHALVSLLQNLNKANYNLPIMVTDSGKPPMTNITDLRVQVCSCKNSKVDCNGAGALHLSLSLLLLFSLLSLLSGL.

Residues M1–A22 form the signal peptide. Residues D23–R138 constitute a propeptide that is removed on maturation. 5 Cadherin domains span residues S143–F245, R246–F363, T364–F477, Y478–I585, and Y586–C680. The interval P156–D183 is disordered. Over residues D158–K172 the composition is skewed to basic and acidic residues. Residues N382, N489, N500, N530, N598, N638, and N671 are each glycosylated (N-linked (GlcNAc...) asparagine). The GPI-anchor amidated glycine moiety is linked to residue G693. Residues A694–L714 constitute a propeptide, removed in mature form.

As to quaternary structure, by contrast to classical cadherins, homodimerization in trans is not mediated by cadherin EC1 domain strand-swapping, but instead through a homophilic adhesive interface which joins two elongated EC1-EC2 domains through a region near their Ca2+-binding sites to form a tetrahedral, X-like shape.

The protein localises to the cell membrane. Its subcellular location is the cytoplasm. Its function is as follows. Cadherins are calcium-dependent cell adhesion proteins. They preferentially interact with themselves in a homophilic manner in connecting cells; cadherins may thus contribute to the sorting of heterogeneous cell types. May act as a negative regulator of neural cell growth. The polypeptide is Cadherin-13 (Cdh13) (Mus musculus (Mouse)).